We begin with the raw amino-acid sequence, 192 residues long: Probable cobalt-precorrin-6B C(15)-methyltransferase (decarboxylating) (192 aa).

Residues Thr-17, 41 to 45, Asp-62, and Ala-91 each bind S-adenosyl-L-methionine; that span reads GCGTG.

This sequence belongs to the methyltransferase superfamily. Archaeal-type CbiT family. Homotetramer.

It carries out the reaction Co-precorrin-6B + S-adenosyl-L-methionine = Co-precorrin-7 + S-adenosyl-L-homocysteine + CO2. It functions in the pathway cofactor biosynthesis; adenosylcobalamin biosynthesis; cob(II)yrinate a,c-diamide from sirohydrochlorin (anaerobic route): step 8/10. In terms of biological role, catalyzes the methylation of C-15 in cobalt-precorrin-6B followed by the decarboxylation of C-12 to form cobalt-precorrin-7. The chain is Probable cobalt-precorrin-6B C(15)-methyltransferase (decarboxylating) from Methanothermobacter thermautotrophicus (strain ATCC 29096 / DSM 1053 / JCM 10044 / NBRC 100330 / Delta H) (Methanobacterium thermoautotrophicum).